A 288-amino-acid chain; its full sequence is 4-hydroxy-3-methylbut-2-enyl diphosphate reductase (288 aa).

Residue Cys-12 coordinates [4Fe-4S] cluster. Residues His-42 and His-77 each coordinate (2E)-4-hydroxy-3-methylbut-2-enyl diphosphate. The dimethylallyl diphosphate site is built by His-42 and His-77. Positions 42 and 77 each coordinate isopentenyl diphosphate. Cys-99 is a binding site for [4Fe-4S] cluster. Residue His-127 coordinates (2E)-4-hydroxy-3-methylbut-2-enyl diphosphate. His-127 lines the dimethylallyl diphosphate pocket. His-127 lines the isopentenyl diphosphate pocket. The active-site Proton donor is Glu-129. Residue Thr-165 coordinates (2E)-4-hydroxy-3-methylbut-2-enyl diphosphate. Position 193 (Cys-193) interacts with [4Fe-4S] cluster. Positions 221, 222, 223, and 265 each coordinate (2E)-4-hydroxy-3-methylbut-2-enyl diphosphate. Positions 221, 222, 223, and 265 each coordinate dimethylallyl diphosphate. Isopentenyl diphosphate contacts are provided by Ser-221, Ser-222, Asn-223, and Ser-265.

Belongs to the IspH family. Requires [4Fe-4S] cluster as cofactor.

It carries out the reaction isopentenyl diphosphate + 2 oxidized [2Fe-2S]-[ferredoxin] + H2O = (2E)-4-hydroxy-3-methylbut-2-enyl diphosphate + 2 reduced [2Fe-2S]-[ferredoxin] + 2 H(+). The enzyme catalyses dimethylallyl diphosphate + 2 oxidized [2Fe-2S]-[ferredoxin] + H2O = (2E)-4-hydroxy-3-methylbut-2-enyl diphosphate + 2 reduced [2Fe-2S]-[ferredoxin] + 2 H(+). The protein operates within isoprenoid biosynthesis; dimethylallyl diphosphate biosynthesis; dimethylallyl diphosphate from (2E)-4-hydroxy-3-methylbutenyl diphosphate: step 1/1. Its pathway is isoprenoid biosynthesis; isopentenyl diphosphate biosynthesis via DXP pathway; isopentenyl diphosphate from 1-deoxy-D-xylulose 5-phosphate: step 6/6. Catalyzes the conversion of 1-hydroxy-2-methyl-2-(E)-butenyl 4-diphosphate (HMBPP) into a mixture of isopentenyl diphosphate (IPP) and dimethylallyl diphosphate (DMAPP). Acts in the terminal step of the DOXP/MEP pathway for isoprenoid precursor biosynthesis. This is 4-hydroxy-3-methylbut-2-enyl diphosphate reductase from Thermoanaerobacter pseudethanolicus (strain ATCC 33223 / 39E) (Clostridium thermohydrosulfuricum).